Here is a 384-residue protein sequence, read N- to C-terminus: G protein-coupled receptor 88 (384 aa).

The Extracellular portion of the chain corresponds to 1-35; sequence MTNSSSTSTSSTTGGSLLLLCEEEESWAGRRIPVS. Asn-3 is a glycosylation site (N-linked (GlcNAc...) asparagine). The helical transmembrane segment at 36 to 56 threads the bilayer; sequence LLYSGLAIGGTLANGMVIYLV. Topologically, residues 57–73 are cytoplasmic; it reads SSFRKLQTTSNAFIVNG. The helical transmembrane segment at 74-94 threads the bilayer; sequence CAADLSVCALWMPQEAVLGLL. The Extracellular portion of the chain corresponds to 95–116; it reads PTGSAEPPADWDGAGGSYRLLR. The chain crosses the membrane as a helical span at residues 117 to 136; the sequence is GGLLGLGLTVSLLSHCLVAL. The Cytoplasmic portion of the chain corresponds to 137–158; the sequence is NRYLLITRAPATYQALYQRRHT. Residues 159–179 form a helical membrane-spanning segment; it reads AGMLALSWALALGLVLLLPPW. The Extracellular portion of the chain corresponds to 180 to 195; that stretch reads APRPGAAPPRVHYPAL. The chain crosses the membrane as a helical span at residues 196 to 216; that stretch reads LAAAALLAQTALLLHCYLGIV. The Cytoplasmic portion of the chain corresponds to 217–285; it reads RRVRVSVKRV…RAQRRLSGLS (69 aa). A helical transmembrane segment spans residues 286-306; the sequence is VLLLCCVFLLATQPLVWVSLA. The Extracellular portion of the chain corresponds to 307–310; it reads SGFS. A helical membrane pass occupies residues 311–331; that stretch reads LPVPWGVQAASWLLCCALSAL. At 332–384 the chain is on the cytoplasmic side; sequence NPLLYTWRNEEFRRSVRSVLPGVGDAAAAAVAATAVPAVSQAQLGTRAAGQHW.

It belongs to the G-protein coupled receptor 1 family. In terms of tissue distribution, expressed predominantly in the striatum.

The protein localises to the cell membrane. It localises to the cell projection. The protein resides in the cilium membrane. Its subcellular location is the cytoplasm. It is found in the nucleus. Its function is as follows. Orphan G protein-coupled receptor implicated in a large repertoire of behavioral responses that engage motor activities, spatial learning, and emotional processing. May play a role in the regulation of cognitive and motor function. Couples with the heterotrimeric G protein complex of the G(i) subfamily, consisting of GNAI1, GNB1 and GNG2, thereby acting through a G(i)-mediated pathway. Plays a role in the attenuation of D1 dopamine receptor (D1R)-mediated cAMP response in ciliated cells. In non-ciliated cells, involved in the inhibition of the beta-2 adrenergic receptor (B2AR) response. The polypeptide is G protein-coupled receptor 88 (GPR88) (Homo sapiens (Human)).